The primary structure comprises 541 residues: Chaperonin GroEL 1 (541 aa).

ATP-binding positions include 29–32, 86–90, Gly-413, 479–481, and Asp-495; these read TLGP, DGTTT, and NAA.

It belongs to the chaperonin (HSP60) family. Forms a cylinder of 14 subunits composed of two heptameric rings stacked back-to-back. Interacts with the co-chaperonin GroES.

It localises to the cytoplasm. The catalysed reaction is ATP + H2O + a folded polypeptide = ADP + phosphate + an unfolded polypeptide.. Its function is as follows. Together with its co-chaperonin GroES, plays an essential role in assisting protein folding. The GroEL-GroES system forms a nano-cage that allows encapsulation of the non-native substrate proteins and provides a physical environment optimized to promote and accelerate protein folding. This chain is Chaperonin GroEL 1, found in Synechocystis sp. (strain ATCC 27184 / PCC 6803 / Kazusa).